The sequence spans 197 residues: Na(+)-translocating NADH-quinone reductase subunit E (197 aa).

6 helical membrane-spanning segments follow: residues 11–31 (SVFIENMALSFFLGMCTFLAV), 35–55 (VSTAFGLGVAVIFVLGLSVPV), 76–96 (FLKFITFIGVIAALVQILEMF), 108–128 (LGIYLPLITVNCAIFGAVSFM), 139–159 (VVYGFGAGLGWMLAIVALAGI), and 175–195 (LGITFIAAGLMAMAFMSFSGI).

Belongs to the NqrDE/RnfAE family. As to quaternary structure, composed of six subunits; NqrA, NqrB, NqrC, NqrD, NqrE and NqrF.

It is found in the cell inner membrane. It carries out the reaction a ubiquinone + n Na(+)(in) + NADH + H(+) = a ubiquinol + n Na(+)(out) + NAD(+). Functionally, NQR complex catalyzes the reduction of ubiquinone-1 to ubiquinol by two successive reactions, coupled with the transport of Na(+) ions from the cytoplasm to the periplasm. NqrA to NqrE are probably involved in the second step, the conversion of ubisemiquinone to ubiquinol. The polypeptide is Na(+)-translocating NADH-quinone reductase subunit E (Neisseria meningitidis serogroup B (strain ATCC BAA-335 / MC58)).